A 1142-amino-acid polypeptide reads, in one-letter code: Auxin response factor 5 (1142 aa).

A DNA-binding region (TF-B3) is located at residues phenylalanine 148–asparagine 250. One can recognise a PB1 domain in the interval arginine 1009 to glutamate 1093. A disordered region spans residues serine 1114–glutamate 1142.

Belongs to the ARF family. In terms of assembly, homodimers and heterodimers. In terms of tissue distribution, expressed in roots, culms, leaves and young panicles.

The protein resides in the nucleus. In terms of biological role, auxin response factors (ARFs) are transcriptional factors that bind specifically to the DNA sequence 5'-TGTCTC-3' found in the auxin-responsive promoter elements (AuxREs). This is Auxin response factor 5 (ARF5) from Oryza sativa subsp. japonica (Rice).